Consider the following 418-residue polypeptide: MLKKDMNIADFDPQLFQAIADETRRQEEHIELIASENYTSPRVLEAQGSQLTNKYAEGYPGKRYYGGCEHVDIAEELAISRAKELFGATYANVQPHSGSQANSAVFMALLQGGDTVLGMSLAHGGHLTHGSHVSFSGKLYNAVQYGIDEATGKIDYAEVERLAVEHKPKMIIAGFSAYSGIIDWGKFREIADKVGAYLFVDMAHVAGLVAAGIYPNPLPHAHVVTTTTHKTLAGPRGGLILSACDDEAIYKKLNSAVFPGGQGGPLMHVIAAKAVAFKEALEPEFTAYQEQVVVNAKAMAKTFIERGYDVVSGGTDNHLFLLDLISKDITGKDADAALGLANITVNKNSVPNDPRSPFVTSGLRIGSPAITRRGFKEEQSVELTNWMCDVLDDITDQGTIERVKNQVLELCARFPVYG.

Residues L121 and 125–127 each bind (6S)-5,6,7,8-tetrahydrofolate; that span reads GHL. N6-(pyridoxal phosphate)lysine is present on K230. 356–358 provides a ligand contact to (6S)-5,6,7,8-tetrahydrofolate; the sequence is SPF.

This sequence belongs to the SHMT family. Homodimer. Pyridoxal 5'-phosphate serves as cofactor.

Its subcellular location is the cytoplasm. The catalysed reaction is (6R)-5,10-methylene-5,6,7,8-tetrahydrofolate + glycine + H2O = (6S)-5,6,7,8-tetrahydrofolate + L-serine. It participates in one-carbon metabolism; tetrahydrofolate interconversion. The protein operates within amino-acid biosynthesis; glycine biosynthesis; glycine from L-serine: step 1/1. In terms of biological role, catalyzes the reversible interconversion of serine and glycine with tetrahydrofolate (THF) serving as the one-carbon carrier. This reaction serves as the major source of one-carbon groups required for the biosynthesis of purines, thymidylate, methionine, and other important biomolecules. Also exhibits THF-independent aldolase activity toward beta-hydroxyamino acids, producing glycine and aldehydes, via a retro-aldol mechanism. This is Serine hydroxymethyltransferase from Shewanella sediminis (strain HAW-EB3).